A 688-amino-acid chain; its full sequence is DNA ligase (688 aa).

NAD(+)-binding positions include 51-55, 100-101, and Glu129; these read DSEYD and SL. Catalysis depends on Lys131, which acts as the N6-AMP-lysine intermediate. NAD(+)-binding residues include Arg152, Glu189, Lys308, and Lys332. Residues Cys426, Cys429, Cys444, and Cys450 each coordinate Zn(2+). Positions 609-688 constitute a BRCT domain; the sequence is ADEQPLKGQT…DELLALLANS (80 aa).

The protein belongs to the NAD-dependent DNA ligase family. LigA subfamily. Mg(2+) serves as cofactor. Requires Mn(2+) as cofactor.

It catalyses the reaction NAD(+) + (deoxyribonucleotide)n-3'-hydroxyl + 5'-phospho-(deoxyribonucleotide)m = (deoxyribonucleotide)n+m + AMP + beta-nicotinamide D-nucleotide.. Functionally, DNA ligase that catalyzes the formation of phosphodiester linkages between 5'-phosphoryl and 3'-hydroxyl groups in double-stranded DNA using NAD as a coenzyme and as the energy source for the reaction. It is essential for DNA replication and repair of damaged DNA. This Shewanella sp. (strain MR-4) protein is DNA ligase.